We begin with the raw amino-acid sequence, 556 residues long: MLRSNAITQGIQRSPNRAMLRAVGFDDNDFNKPIIGIANGHSTITPCNMGLMDLANRAESALKEAGAMPQTFGTITVSDGISMGTEGMKYSLVSREVIADSIETACNAQSMDGVLAIGGCDKNMPGAMLSMARMNIPSIFVYGGTIKPGKLDGCDLTVVSSFEAVGQLASGKIDKDRLIAVEKNAIPGPGSCGGMFTANTMSAAIETMGFSLPFSSTMAAVDDEKAESAAESAQVLVNAVKNNIRPLDLLTKEAFENAISVIMAVGGSTNSVLHLLAIARTAGVDLTIDDFERIRQTVPVICDLKPSGKYVTVDLHKAGGIPQVMKLLLDAGMLHGECKTIEGKTIKEVLRDIPSKPKENQDVIRQISNPIYKKGHLAILKGNLASEGSVAKISGVKTPVLTGPARVFESEEECLTAILDNKVKAGDVVVVRYEGPVGGPGMREMLSPTSAIVGQGLGEKVALITDGRFSGGSYGLVVGHVAPEAAVGGTIGLVEEGDSITVDANKLLIQLNVEERELARRKQKWEKPKPRYKTGILGKYSRLVSSSSQGATTDQI.

Cys47 contacts [2Fe-2S] cluster. A Mg(2+)-binding site is contributed by Asp79. Cys120 is a [2Fe-2S] cluster binding site. Asp121 and Lys122 together coordinate Mg(2+). An N6-carboxylysine modification is found at Lys122. Cys192 contributes to the [2Fe-2S] cluster binding site. Glu444 contacts Mg(2+). The Proton acceptor role is filled by Ser470.

Belongs to the IlvD/Edd family. Homodimer. The cofactor is [2Fe-2S] cluster. Mg(2+) is required as a cofactor.

The enzyme catalyses (2R)-2,3-dihydroxy-3-methylbutanoate = 3-methyl-2-oxobutanoate + H2O. It carries out the reaction (2R,3R)-2,3-dihydroxy-3-methylpentanoate = (S)-3-methyl-2-oxopentanoate + H2O. It functions in the pathway amino-acid biosynthesis; L-isoleucine biosynthesis; L-isoleucine from 2-oxobutanoate: step 3/4. The protein operates within amino-acid biosynthesis; L-valine biosynthesis; L-valine from pyruvate: step 3/4. Functions in the biosynthesis of branched-chain amino acids. Catalyzes the dehydration of (2R,3R)-2,3-dihydroxy-3-methylpentanoate (2,3-dihydroxy-3-methylvalerate) into 2-oxo-3-methylpentanoate (2-oxo-3-methylvalerate) and of (2R)-2,3-dihydroxy-3-methylbutanoate (2,3-dihydroxyisovalerate) into 2-oxo-3-methylbutanoate (2-oxoisovalerate), the penultimate precursor to L-isoleucine and L-valine, respectively. This chain is Dihydroxy-acid dehydratase, found in Prochlorococcus marinus (strain NATL2A).